Here is a 390-residue protein sequence, read N- to C-terminus: O-phospho-L-seryl-tRNA:Cys-tRNA synthase 2 (390 aa).

Residues A83 to R84, N187, and S210 to H212 contribute to the pyridoxal 5'-phosphate site. Position 213 is an N6-(pyridoxal phosphate)lysine (K213).

The protein belongs to the SepCysS family. In terms of assembly, homodimer. Interacts with SepRS. Pyridoxal 5'-phosphate is required as a cofactor.

The catalysed reaction is O-phospho-L-seryl-tRNA(Cys) + hydrogen sulfide + H(+) = L-cysteinyl-tRNA(Cys) + phosphate. Converts O-phospho-L-seryl-tRNA(Cys) (Sep-tRNA(Cys)) to L-cysteinyl-tRNA(Cys) (Cys-tRNA(Cys)). This is O-phospho-L-seryl-tRNA:Cys-tRNA synthase 2 from Archaeoglobus fulgidus (strain ATCC 49558 / DSM 4304 / JCM 9628 / NBRC 100126 / VC-16).